Consider the following 32-residue polypeptide: uncharacterized protein (32 aa).

Residues 3-23 traverse the membrane as a helical segment; sequence IGIIFPVVIFITAVVFLAWFF.

The protein localises to the cell inner membrane. This is an uncharacterized protein from Escherichia coli (strain K12).